The sequence spans 122 residues: Large ribosomal subunit protein uL14 (122 aa).

The protein belongs to the universal ribosomal protein uL14 family. In terms of assembly, part of the 50S ribosomal subunit. Forms a cluster with proteins L3 and L19. In the 70S ribosome, L14 and L19 interact and together make contacts with the 16S rRNA in bridges B5 and B8.

Its function is as follows. Binds to 23S rRNA. Forms part of two intersubunit bridges in the 70S ribosome. The chain is Large ribosomal subunit protein uL14 from Solidesulfovibrio magneticus (strain ATCC 700980 / DSM 13731 / RS-1) (Desulfovibrio magneticus).